We begin with the raw amino-acid sequence, 513 residues long: Histidine ammonia-lyase (513 aa).

The 5-imidazolinone (Ala-Gly) cross-link spans 144-146 (ASG). The residue at position 145 (S145) is a 2,3-didehydroalanine (Ser).

The protein belongs to the PAL/histidase family. Contains an active site 4-methylidene-imidazol-5-one (MIO), which is formed autocatalytically by cyclization and dehydration of residues Ala-Ser-Gly.

The protein localises to the cytoplasm. The enzyme catalyses L-histidine = trans-urocanate + NH4(+). Its pathway is amino-acid degradation; L-histidine degradation into L-glutamate; N-formimidoyl-L-glutamate from L-histidine: step 1/3. This Streptococcus pyogenes serotype M6 (strain ATCC BAA-946 / MGAS10394) protein is Histidine ammonia-lyase.